The sequence spans 213 residues: Uridine kinase (213 aa).

13–20 is a binding site for ATP; that stretch reads GASASGKS.

The protein belongs to the uridine kinase family.

Its subcellular location is the cytoplasm. The catalysed reaction is uridine + ATP = UMP + ADP + H(+). It catalyses the reaction cytidine + ATP = CMP + ADP + H(+). It functions in the pathway pyrimidine metabolism; CTP biosynthesis via salvage pathway; CTP from cytidine: step 1/3. The protein operates within pyrimidine metabolism; UMP biosynthesis via salvage pathway; UMP from uridine: step 1/1. The polypeptide is Uridine kinase (Histophilus somni (strain 129Pt) (Haemophilus somnus)).